The following is a 334-amino-acid chain: D-fructose 1,6-bisphosphatase class 2/sedoheptulose 1,7-bisphosphatase (334 aa).

The Mn(2+) site is built by Asp-33, Glu-57, Asp-85, and Glu-88. Residues 88–90, Tyr-119, 164–166, and 186–188 each bind substrate; these read EGT, RAR, and DGD. A Mn(2+)-binding site is contributed by Glu-213.

The protein belongs to the FBPase class 2 family. In terms of assembly, homotetramer. Mn(2+) serves as cofactor.

It catalyses the reaction beta-D-fructose 1,6-bisphosphate + H2O = beta-D-fructose 6-phosphate + phosphate. It carries out the reaction D-sedoheptulose 1,7-bisphosphate + H2O = D-sedoheptulose 7-phosphate + phosphate. Its pathway is carbohydrate biosynthesis; Calvin cycle. In terms of biological role, catalyzes the hydrolysis of fructose 1,6-bisphosphate (Fru 1,6-P2) and sedoheptulose 1,7-bisphosphate (Sed 1,7-P2) to fructose 6-phosphate and sedoheptulose 7-phosphate, respectively. In Prochlorococcus marinus (strain NATL1A), this protein is D-fructose 1,6-bisphosphatase class 2/sedoheptulose 1,7-bisphosphatase.